The following is a 292-amino-acid chain: Small ribosomal subunit protein uS3 (292 aa).

The KH type-2 domain maps to 39–110 (IRLEIMKFLK…KISIKIKEVK (72 aa)). Residues 247 to 268 (KANERQSRAALNKKDGLSKDET) are disordered.

Belongs to the universal ribosomal protein uS3 family. As to quaternary structure, part of the 30S ribosomal subunit. Forms a tight complex with proteins S10 and S14.

Binds the lower part of the 30S subunit head. Binds mRNA in the 70S ribosome, positioning it for translation. The sequence is that of Small ribosomal subunit protein uS3 from Borrelia garinii subsp. bavariensis (strain ATCC BAA-2496 / DSM 23469 / PBi) (Borreliella bavariensis).